Reading from the N-terminus, the 152-residue chain is Leptin (152 aa).

Positions 1-26 are cleaved as a signal peptide; that stretch reads MDHILALVLALLPLSLCVALPGALDA. A disulfide bridge links C109 with C152.

Belongs to the leptin family. In terms of tissue distribution, expressed mostly in the liver.

Its subcellular location is the secreted. May function as part of a signaling pathway that acts to regulate the size of the body fat depot. This Takifugu rubripes (Japanese pufferfish) protein is Leptin (lep).